Consider the following 73-residue polypeptide: Small ribosomal subunit protein bS18 (73 aa).

Belongs to the bacterial ribosomal protein bS18 family. Part of the 30S ribosomal subunit. Forms a tight heterodimer with protein bS6.

In terms of biological role, binds as a heterodimer with protein bS6 to the central domain of the 16S rRNA, where it helps stabilize the platform of the 30S subunit. The chain is Small ribosomal subunit protein bS18 from Synechococcus sp. (strain RCC307).